The primary structure comprises 216 residues: Ribosomal RNA small subunit methyltransferase G (216 aa).

S-adenosyl-L-methionine contacts are provided by residues glycine 73, leucine 78, 124–125 (AE), and arginine 139.

Belongs to the methyltransferase superfamily. RNA methyltransferase RsmG family.

The protein resides in the cytoplasm. Specifically methylates the N7 position of guanine in position 518 of 16S rRNA. This Pseudarthrobacter chlorophenolicus (strain ATCC 700700 / DSM 12829 / CIP 107037 / JCM 12360 / KCTC 9906 / NCIMB 13794 / A6) (Arthrobacter chlorophenolicus) protein is Ribosomal RNA small subunit methyltransferase G.